The chain runs to 4903 residues: MSSEEDRSAEQQQPPPAPPEEPGAPAPSPAAADKRPRGRPRKDGASPFQRARKKPRSRGKSTVEDEDSMDGLETTETENIVETEIKEQSVEEDAETEVDSSKQPVSALQRSVSEESANSLVSVGVEAKISEQLCAFCYCGEKSSLGQGDLKQFRVTPGLTLPWKDQPSNKDIDDNSSGTCEKIQNYAPRKQRGQRKERPPQQSAVSCVSVSTQTACEDQAGKLWDELSLVGLPDAIDVQALFDSTGTCWAHHRCVEWSLGICQMEEPLLVNVDKAVVSGSTERCAFCKHLGATIKCCEEKCTQMYHYPCAAGAGTFQDFSHFFLLCPEHIDQAPERSKEDANCAVCDSPGDLLDQFFCTTCGQHYHGMCLDIAVTPLKRAGWQCPECKVCQNCKQSGEDSKMLVCDTCDKGYHTFCLQPVMKSVPTNGWKCKNCRICIECGTRSSTQWHHNCLICDTCYQQQDNLCPFCGKCYHPELQKDMLHCNMCKRWVHLECDKPTDQELDSQLKEDYICMYCKHLGAEIDPLHPGNEVEMPELPTDYASGMEIEGTEDEVVFLEQTVNKDVSDHQCRPGIVPDVQVYTEEPQKSNPLESPDTVGLITSESSDNKMNPDLANEIAHEVDTEKTEMLSKGRHVCEEDQNEDRMEVTENIEVLPHQTIVPQEDLLLSEDSEVASKELSPPKSAPETAAPEALLSPHSERSLSCKEPLLTERVQEEMEQKENSEFSTGCVDFEMTLAVDSCDKDSSCQGDKYVELPAEEESTFSSATDLNKADVSSSSTLCSDLPSCDMLHGYPPAFNSAAGSIMPTTYISVTPKIGMGKPAITKRKFSPGRPRSKQGAWSNHNTVSPPSWAPDTSEGREIFKPRQLSGSAIWSIKVGRGSGFPGKRRPRGAGLSGRGGRGRSKLKSGIGAVVLPGVSAADISSNKDEEENSMHNTVVLFSSSDKFTLQQDMCVVCGSFGQGAEGRLLACSQCGQCYHPYCVSIKITKVVLSKGWRCLECTVCEACGKATDPGRLLLCDDCDISYHTYCLDPPLQTVPKGGWKCKWCVWCRHCGATSAGLRCEWQNNYTQCAPCASLSSCPVCCRNYREEDLILQCRQCDRWMHAVCQNLNTEEEVENVADIGFDCSMCRPYMPVSNVPSSDCCDSSLVAQIVTKVKELDPPKTYTQDGVCLTESGMSQLQSLTVTAPRRKRTKPKLKLKIINQNSVAVLQTPPDIQSEHSRDGEMDDSREGELMDCDGKSESSPEREAGDDETKGIEGTDAIKKRKRKPYRPGIGGFMVRQRSRTGQGKAKRSVVRKDSSGSISEQLPSRDDGWREQLPDTLVDEPVSVAENTDKIKKRYRKRKNKLEETFPAYLQEAFFGKDLLDTSRQNKLSVDNLSEDAAQLSFKTGFLDPSSDPLLSSSSTSAKPGTQGTADDPLADISEVLNTDDDILGIISDDLAKSVDHSDIGPTTADASSLPQPGVSQSSRPLTEEQLDGILSPELDKMVTDGAILGKLYKIPELGGKDVEDLFTAVLSPATTQPAPLPQPPPPPQLLPMHNQDVFSRMPLMNGLIGPSPHLPHNSLPPGSGLGTFPAIAQSPYTDVRDKSPAFNAIASDPNSSWAPTTPSMEGENDTLSNAQRSTLKWEKEEALGEMATVAPVLYTNINFPNLKEEFPDWTTRVKQIAKLWRKASSQERAPYVQKARDNRAALRINKVQMSNDSMKRQQQQDSIDPSSRIDSDLFKDPLKQRESEHEQEWKFRQQMRQKSKQQAKIEATQKLEQVKNEQQQQQQQQQQQQQQQLASQHLLVAPGSDTPSSGAQSPLTPQAGNGNVSPAQTFHKDLFSKHLPGTPASTPSDGVFVKPQPPPPPSTPSRIPVQESLSQSQNSQPPSPQMFSPGSSHSRPPSPVDPYAKMVGTPRPPPGGHSFPRRNSVTPVENCVPLSSVPRPIHMNETSATRPSPARDLCASSMTNSDPYAKPPDTPRPMMTDQFSKPFSLPRSPVISEQSTKGPLTTGTSDHFTKPSPRTDAFQRQRLPDPYAGPSLTPAPLGNGPFKTPLHPPPSQDPYGSVSQTSRRLSVDPYERPALTPRPVDNFSHSQSNDPYSHPPLTPHPAMTESFTHASRAFPQPGTISRSASQDPYSQPPGTPRPLIDSYSQTSGTARSNPDPYSQPPGTPRPNTIDPYSQQPPTPRPSPQTDMFVSSVANQRHTDPYTHHLGPPRPGISVPYSQPPAVPRPRTSEGFTRPSSARPALMPNQDPFLQAAQNRVPGLPGPLIRPPDTCSQTPRPPGPGRIDTFTHASSSAVRDPYDQPPVTPRPHSESFGTSQVVHDLVDRPVPGSEGNFSTSSNLPVSSQGQQFSSVSQLPGPVPTSGGTDTQNTVNMSQADTEKLRQRQKLREIILQQQQQKKIASRQEKGPQDTAVVPHPVPLPHWQPESINQAFTRPPPPYPGSTRSPVIPPLGPRYAVFPKDQRGPYPPEVAGMGMRPHGFRFGFPGAGHGPMPSQDRFHVPQQIQGSGIPPHIRRPMSMEMPRPSNNPPLNNPVGLPQHFPPQGLPVQQHNILGQAFIELRHRAPDGRSRLPFAASPSSVIESPSHPRHGNFLPRPDFPGPRHTDPIRQPSQCLSNQLPVHPNLEQVPPSQQEQGHPAHQSSIVMRPLNHPLSGEFSEAPLSTSTPAETSPDNLEIAGQSSAGLEEKLDSDDPSVKELDVKDLEGVEVKDLDDEDLENLNLDTEDGKGDDLDTLDNLETNDPNLDDLLRSGEFDIIAYTDPELDLGDKKSMFNEELDLNVPIDDKLDNQCASVEPKTRDQGDKTMVLEDKDLPQRKSSVSSEIKTEALSPYSKEEIQSEIKNHDDSRGDADTACSQAASAQTNHSDRGKTALLTTDQDMLEKRCNQENAGPVVSAIQGSTPLPARDVMNSCDITGSTPVLSSLLSNEKCDDSDIRPSGSSPPSLPISPSTHGSSLPPTLIVPPSPLLDNTVNSNVTVVPRINHAFSQGVPVNPGFIQGQSSVNHNLGTGKPTNQTVPLTNQSSTMSGPQQLMIPQTLAQQNRERPLLLEEQPLLLQDLLDQERQEQQQQRQMQAMIRQRSEPFFPNIDFDAITDPIMKAKMVALKGINKVMAQNSLGMPPMVMSRFPFMGPSVAGTQNNDGQTLVPQAVAQDGSITHQISRPNPPNFGPGFVNDSQRKQYEEWLQETQQLLQMQQKYLEEQIGAHRKSKKALSAKQRTAKKAGREFPEEDAEQLKHVTEQQSMVQKQLEQIRKQQKEHAELIEDYRIKQQQQQQQCALAPPILMPGVQPQPPLVPGATSLTMSQPNFPMVPQQLQHQQHTAVISGHTSPARMPSLPGWQSNSASAHLPLNPPRIQPPIAQLSLKTCTPAPGTVSSANPQNGPPPRVEFDDNNPFSESFQERERKERLREQQERQRVQLMQEVDRQRALQQRMEMEQHCLMGAELANRTPVSQMPFYGSDRPCDFLQPPRPLQQSPQHQQQIGPVLQQQNVQQGSVNSPPNQTFMQTNEQRQVGPPSFVPDSPSASGGSPNFHSVKPGHGNLPGSSFQQSPLRPPFTPILPGTSPVANSNVPCGQDPAVTQGQNYSGSSQSLIQLYSDIIPEEKGKKKRTRKKKKDDDAESGKAPSTPHSDCAAPLTPGLSETTSTPAVSSPSELPQQRQQEPVEPVPVPTPNVSAGQPCIESENKLPNSEFIKETSNQQTHVNAEADKPSVETPNKTEEIKLEKAETQPSQEDTKVEEKTGNKIKDIVAGPVSSIQCPSHPVGTPTTKGDTGNELLKHLLKNKKASSLLTQKPEGTLSSDESSTKDGKLIEKQSPAEGLQTLGAQMQGGFGGGNSQLPKTDGASENKKQRSKRTQRTGEKAAPRSKKRKKDEEEKQAMYSSSDSFTHLKQQNNLSNPPTPPASLPPTPPPMACQKMANGFATTEELAGKAGVLVSHEVARALGPKPFQLPFRPQDDLLARAIAQGPKTVDVPASLPTPPHNNHEELRIQDHYGDRDTPDSFVPSSSPESVVGVEVNKYPDLSLVKEEPPEPVPSPIIPILPSISGKNSESRRNDIKTEPGTLFFTSPFGSSPNGPRSGLISVAITLHPTAAENISSVVAAFSDLLHVRIPNSYEVSNAPDVPPMGLVSSHRVNPSLEYRQHLLLRGPPPGSANPPRLATSYRLKQPNVPFPPTSNGLSGYKDSSHGPAEGASLRPQWCCHCKVVILGSGVRKSCKDLTFVNKGSRENTKRMEKDIVFCSNNCFILYSSAAQAKNSDNKESLPSLPQSPMKEPSKAFHQYSNNISTLDVHCLPQFQEKVSPPASPPISFPPAFEAAKVESKPDELKVTVKLKPRLRTVPVGLEDCRPLNKKWRGMKWKKWSIHIVIPKGTFKPPCEDEIDEFLKKLGTCLKPDPVPKDCRKCCFCHEEGDGLTDGPARLLNLDLDLWVHLNCALWSTEVYETQAGALINVELALRRGLQMKCVFCHKTGATSGCHRFRCTNIYHFTCATKAQCMFFKDKTMLCPMHKPKGIHEQQLSYFAVFRRVYVQRDEVRQIASIVQRGERDHTFRVGSLIFHTIGQLLPQQMQAFHSPKALFPVGYEASRLYWSTRYANRRCRYLCSIEEKDGRPVFVIRIVEQGHEDLVLSDSSPKDVWDKILEPVACVRKKSEMLQLFPAYLKGEDLFGLTVSAVARIAESLPGVEACENYTFRYGRNPLMELPLAVNPTGCARSEPKMSAHVKRFVLRPHTLNSTSTSKSFQSTVTGELNAPYSKQFVHSKSSQYRRMKTEWKSNVYLARSRIQGLGLYAARDIEKHTMVIEYIGTIIRNEVANRKEKLYESQNRGVYMFRMDNDHVIDATLTGGPARYINHSCAPNCVAEVVTFERGHKIIISSNRRIQKGEELCYDYKFDFEDDQHKIPCHCGAVNCRKWMN.

Disordered regions lie at residues 1 to 116 (MSSE…SEES) and 159 to 202 (LTLP…PPQQ). Over residues 13–28 (QPPPAPPEEPGAPAPS) the composition is skewed to pro residues. A phosphoserine mark is found at Ser-28 and Ser-46. Residues 34 to 46 (KRPRGRPRKDGAS) constitute a DNA-binding region (a.T hook). The span at 50–59 (RARKKPRSRG) shows a compositional bias: basic residues. A compositionally biased stretch (acidic residues) spans 64–81 (EDEDSMDGLETTETENIV). Phosphoserine is present on residues Ser-89 and Ser-113. Positions 101-116 (SKQPVSALQRSVSEES) are enriched in polar residues. The C2HC pre-PHD-type 1; degenerate zinc finger occupies 226–261 (ELSLVGLPDAIDVQALFDSTGTCWAHHRCVEWSLGI). 4 consecutive PHD-type zinc fingers follow at residues 282–330 (ERCA…PEHI), 340–390 (DANC…CKVC), 387–437 (CKVC…CRIC), and 463–519 (DNLC…CKHL). Residues 343–388 (CAVCDSPGDLLDQFFCTTCGQHYHGMCLDIAVTPLKRAGWQCPECK) form an RING-type zinc finger. Residues 435–488 (RICIECGTRSSTQWHHNCLICDTCYQQQDNLCPFCGKCYHPELQKDMLHCNMCK) enclose the DHHC domain. The interval 671 to 703 (SEVASKELSPPKSAPETAAPEALLSPHSERSLS) is disordered. At Lys-751 the chain carries N6-acetyllysine. Over residues 824-835 (TKRKFSPGRPRS) the composition is skewed to basic residues. Disordered stretches follow at residues 824–857 (TKRK…DTSE) and 882–904 (GFPG…GRSK). The span at 838 to 848 (GAWSNHNTVSP) shows a compositional bias: polar residues. Ser-847 is subject to Phosphoserine. 3 PHD-type zinc fingers span residues 950-1003 (QDMC…CTVC), 1000-1050 (CTVC…CVWC), and 1077-1132 (LSSC…CRPY). A disordered region spans residues 1208-1318 (AVLQTPPDIQ…PSRDDGWREQ (111 aa)). A compositionally biased stretch (basic and acidic residues) spans 1217–1263 (QSEHSRDGEMDDSREGELMDCDGKSESSPEREAGDDETKGIEGTDAI). Position 1294 is a phosphoserine (Ser-1294). The segment covering 1309–1318 (PSRDDGWREQ) has biased composition (basic and acidic residues). Positions 1330-1352 (VAENTDKIKKRYRKRKNKLEETF) form a coiled coil. Disordered stretches follow at residues 1397 to 1419 (SDPL…ADDP) and 1447 to 1473 (HSDI…RPLT). Polar residues-rich tracts occupy residues 1406-1415 (TSAKPGTQGT) and 1455-1471 (ADAS…SSRP). N6-acetyllysine is present on Lys-1497. 2 disordered regions span residues 1594-1617 (NAIA…ENDT) and 1698-1757 (VQMS…AKIE). Positions 1599–1617 (DPNSSWAPTTPSMEGENDT) are enriched in polar residues. A compositionally biased stretch (low complexity) spans 1707-1717 (RQQQQDSIDPS). Positions 1718-1742 (SRIDSDLFKDPLKQRESEHEQEWKF) are enriched in basic and acidic residues. Positions 1743–1790 (RQQMRQKSKQQAKIEATQKLEQVKNEQQQQQQQQQQQQQQQLASQHLL) form a coiled coil. At Lys-1761 the chain carries N6-acetyllysine. Residues 1791 to 2375 (VAPGSDTPSS…MSQADTEKLR (585 aa)) are disordered. Residues 1796–1819 (DTPSSGAQSPLTPQAGNGNVSPAQ) show a composition bias toward polar residues. A compositionally biased stretch (low complexity) spans 1855–1886 (PSRIPVQESLSQSQNSQPPSPQMFSPGSSHSR). Ser-1983 bears the Phosphoserine mark. A compositionally biased stretch (polar residues) spans 1986 to 2001 (ISEQSTKGPLTTGTSD). Lys-2005 carries the post-translational modification N6-acetyllysine. Composition is skewed to polar residues over residues 2113 to 2124 (GTISRSASQDPY), 2137 to 2151 (SYSQ…NPDP), and 2325 to 2334 (GNFSTSSNLP). A compositionally biased stretch (low complexity) spans 2335-2347 (VSSQGQQFSSVSQ). The segment covering 2355–2369 (SGGTDTQNTVNMSQA) has biased composition (polar residues). An asymmetric dimethylarginine mark is found at Arg-2447 and Arg-2563. 3 disordered regions span residues 2561–2668 (RSRL…DNLE), 2702–2736 (KDLD…NDPN), and 2786–2844 (VEPK…GDAD). Polar residues-rich tracts occupy residues 2602-2611 (QPSQCLSNQL), 2621-2636 (PPSQ…QSSI), and 2653-2668 (PLST…DNLE). Basic and acidic residues predominate over residues 2788–2807 (PKTRDQGDKTMVLEDKDLPQ). Residues Lys-2796 and Lys-2803 each carry the N6-acetyllysine modification. Ser-2822 carries the phosphoserine modification. Tyr-2824 carries the post-translational modification Phosphotyrosine. A compositionally biased stretch (basic and acidic residues) spans 2825 to 2843 (SKEEIQSEIKNHDDSRGDA). 2 positions are modified to N6-acetyllysine: Lys-2826 and Lys-2862. The disordered stretch occupies residues 2920 to 2953 (EKCDDSDIRPSGSSPPSLPISPSTHGSSLPPTLI). A compositionally biased stretch (low complexity) spans 2929 to 2942 (PSGSSPPSLPISPS). 2 coiled-coil regions span residues 3047 to 3074 (LLQD…QRSE) and 3166 to 3193 (NDSQ…YLEE). Residues 3198–3214 (HRKSKKALSAKQRTAKK) show a composition bias toward basic residues. Residues 3198–3223 (HRKSKKALSAKQRTAKKAGREFPEED) form a disordered region. 2 coiled-coil regions span residues 3224-3270 (AEQL…QQCA) and 3387-3432 (FSES…QHCL). Disordered stretches follow at residues 3329–3407 (PGWQ…QERQ) and 3444–3910 (SQMP…QKMA). Positions 3391–3407 (FQERERKERLREQQERQ) are enriched in basic and acidic residues. Over residues 3464-3485 (LQQSPQHQQQIGPVLQQQNVQQ) the composition is skewed to low complexity. Polar residues-rich tracts occupy residues 3486-3503 (GSVN…NEQR), 3515-3524 (PSASGGSPNF), 3557-3586 (PVAN…SLIQ), and 3632-3647 (LSET…PSEL). 2 stretches are compositionally biased toward basic and acidic residues: residues 3697-3739 (AEAD…KIKD) and 3795-3804 (SSTKDGKLIE). At Lys-3709 the chain carries N6-acetyllysine. The segment covering 3871–3885 (MYSSSDSFTHLKQQN) has biased composition (polar residues). The span at 3890–3904 (PPTPPASLPPTPPPM) shows a compositional bias: pro residues. At Ser-4027 the chain carries Phosphoserine. The residue at position 4132 (Arg-4132) is an Asymmetric dimethylarginine. The tract at residues 4159-4184 (PNVPFPPTSNGLSGYKDSSHGPAEGA) is disordered. Ser-4260 carries the post-translational modification Phosphoserine. The segment at 4391-4431 (CRKCCFCHEEGDGLTDGPARLLNLDLDLWVHLNCALWSTEV) adopts a C2HC pre-PHD-type 2 zinc-finger fold. The segment at 4452 to 4499 (MKCVFCHKTGATSGCHRFRCTNIYHFTCATKAQCMFFKDKTMLCPMHK) adopts a PHD-type 8 zinc-finger fold. An FYR N-terminal domain is found at 4537–4597 (DHTFRVGSLI…CRYLCSIEEK (61 aa)). In terms of domain architecture, FYR C-terminal spans 4598–4683 (DGRPVFVIRI…EACENYTFRY (86 aa)). Residues 4699 to 4704 (GCARSE) carry the WDR5 interaction motif (WIN) motif. The region spanning 4763–4879 (SNVYLARSRI…KGEELCYDYK (117 aa)) is the SET domain. S-adenosyl-L-methionine-binding positions include Tyr-4817 and 4840–4841 (NH). Zn(2+) is bound by residues Cys-4843, Cys-4891, Cys-4893, and Cys-4898. The Post-SET domain occupies 4887–4903 (HKIPCHCGAVNCRKWMN).

Belongs to the class V-like SAM-binding methyltransferase superfamily. Histone-lysine methyltransferase family. TRX/MLL subfamily. In terms of assembly, component of the MLL3 complex (also named ASCOM complex), at least composed of catalytic subunit KMT2C/MLL3, ASH2L, RBBP5, WDR5, NCOA6, DPY30, KDM6A, PAXIP1/PTIP, PAGR1 and alpha- and beta-tubulin. Forms a core complex with the evolutionary conserved subcomplex WRAD composed of WDR5, RBBP5, ASH2L/ASH2 and DPY30 subunits; WRAD differentially stimulates the methyltransferase activity. Interacts (via WIN motif) with WDR5. In adult, detected in testis, kidney, spleen and lung, weakly expressed in brain and absent in heart and liver. First detected throughout the embryo at 8 dpc when expression is strong in forebrain neuroepithelium and absent in heart. Expressed in the eye lens between 10 and 14.5 dpc. By 13 dpc, expressed strongly in spinal cord, hand/foot plates and gonads.

The protein resides in the nucleus. The catalysed reaction is L-lysyl(4)-[histone H3] + S-adenosyl-L-methionine = N(6)-methyl-L-lysyl(4)-[histone H3] + S-adenosyl-L-homocysteine + H(+). Functionally, histone methyltransferase that catalyzes methyl group transfer from S-adenosyl-L-methionine to the epsilon-amino group of 'Lys-4' of histone H3 (H3K4). Part of chromatin remodeling machinery predominantly forms H3K4me1 methylation marks at active chromatin sites where transcription and DNA repair take place. Likely plays a redundant role with KMT2D in enriching H3K4me1 mark on primed and active enhancer elements. The sequence is that of Histone-lysine N-methyltransferase 2C (Kmt2c) from Mus musculus (Mouse).